A 179-amino-acid chain; its full sequence is Large ribosomal subunit protein uL6 (179 aa).

Belongs to the universal ribosomal protein uL6 family. In terms of assembly, part of the 50S ribosomal subunit.

Functionally, this protein binds to the 23S rRNA, and is important in its secondary structure. It is located near the subunit interface in the base of the L7/L12 stalk, and near the tRNA binding site of the peptidyltransferase center. This chain is Large ribosomal subunit protein uL6, found in Methylacidiphilum infernorum (isolate V4) (Methylokorus infernorum (strain V4)).